Consider the following 360-residue polypeptide: Phospho-N-acetylmuramoyl-pentapeptide-transferase (360 aa).

A run of 10 helical transmembrane segments spans residues 21 to 41 (YLTLRGILGILTALVISFIVG), 70 to 90 (GTPTMGGALILVTITVSTLLW), 97 to 117 (YVWAVLLVTLAYGLIGFVDDY), 134 to 154 (YLWQSVFGLGAALFLYHTASS), 168 to 188 (VVLNMGWLYVPLVYFVVVGSS), 199 to 219 (GLAILPTVLVAGGLAIFAYAS), 236 to 256 (AGELVVFCGALVGAGLGFLWF), 263 to 283 (VFMGDIGALALGAALGMVAVL), 288 to 308 (IVLMIMGGIFVMETVSVMLQV), and 338 to 358 (VIVRFWIISVILVLIGLATLK).

It belongs to the glycosyltransferase 4 family. MraY subfamily. The cofactor is Mg(2+).

It is found in the cell inner membrane. The enzyme catalyses UDP-N-acetyl-alpha-D-muramoyl-L-alanyl-gamma-D-glutamyl-meso-2,6-diaminopimeloyl-D-alanyl-D-alanine + di-trans,octa-cis-undecaprenyl phosphate = di-trans,octa-cis-undecaprenyl diphospho-N-acetyl-alpha-D-muramoyl-L-alanyl-D-glutamyl-meso-2,6-diaminopimeloyl-D-alanyl-D-alanine + UMP. It participates in cell wall biogenesis; peptidoglycan biosynthesis. In terms of biological role, catalyzes the initial step of the lipid cycle reactions in the biosynthesis of the cell wall peptidoglycan: transfers peptidoglycan precursor phospho-MurNAc-pentapeptide from UDP-MurNAc-pentapeptide onto the lipid carrier undecaprenyl phosphate, yielding undecaprenyl-pyrophosphoryl-MurNAc-pentapeptide, known as lipid I. This chain is Phospho-N-acetylmuramoyl-pentapeptide-transferase, found in Methylococcus capsulatus (strain ATCC 33009 / NCIMB 11132 / Bath).